Reading from the N-terminus, the 349-residue chain is Probable esterase Cgl0839 (349 aa).

The region spanning Gly-60 to Phe-329 is the AB hydrolase-1 domain. The active-site Nucleophile is Ser-142. Residues Asp-296 and His-325 contribute to the active site.

Belongs to the AB hydrolase superfamily. Acetyl esterase family. In terms of assembly, homodimer.

Esterase that catalyzes the hydrolysis of 4-nitrophenyl acetate in vitro. This chain is Probable esterase Cgl0839, found in Corynebacterium glutamicum (strain ATCC 13032 / DSM 20300 / JCM 1318 / BCRC 11384 / CCUG 27702 / LMG 3730 / NBRC 12168 / NCIMB 10025 / NRRL B-2784 / 534).